The chain runs to 593 residues: Arginine--tRNA ligase (593 aa).

The short motif at A138 to H148 is the 'HIGH' region element.

Belongs to the class-I aminoacyl-tRNA synthetase family. As to quaternary structure, monomer.

It is found in the cytoplasm. It carries out the reaction tRNA(Arg) + L-arginine + ATP = L-arginyl-tRNA(Arg) + AMP + diphosphate. The polypeptide is Arginine--tRNA ligase (Burkholderia lata (strain ATCC 17760 / DSM 23089 / LMG 22485 / NCIMB 9086 / R18194 / 383)).